The sequence spans 190 residues: Peptide deformylase (190 aa).

Positions 94 and 136 each coordinate Fe cation. The active site involves Glu137. A Fe cation-binding site is contributed by His140.

Belongs to the polypeptide deformylase family. The cofactor is Fe(2+).

The catalysed reaction is N-terminal N-formyl-L-methionyl-[peptide] + H2O = N-terminal L-methionyl-[peptide] + formate. Removes the formyl group from the N-terminal Met of newly synthesized proteins. Requires at least a dipeptide for an efficient rate of reaction. N-terminal L-methionine is a prerequisite for activity but the enzyme has broad specificity at other positions. The chain is Peptide deformylase from Chlorobium luteolum (strain DSM 273 / BCRC 81028 / 2530) (Pelodictyon luteolum).